Consider the following 378-residue polypeptide: Stimulator of interferon genes protein (378 aa).

At methionine 1–arginine 17 the chain is on the cytoplasmic side. The segment at methionine 1–leucine 190 is mediates interaction with ZDHHC1 and ZDHHC11. The helical transmembrane segment at alanine 18–tryptophan 34 threads the bilayer. At glycine 35–leucine 44 the chain is on the lumenal side. A helical transmembrane segment spans residues lysine 45–glutamate 69. Residues leucine 70 to serine 91 lie on the Cytoplasmic side of the membrane. Residue cysteine 88 is the site of S-palmitoyl cysteine attachment. A helical membrane pass occupies residues serine 92–tyrosine 106. The Lumenal segment spans residues cysteine 107 to proline 116. A helical transmembrane segment spans residues phenylalanine 117–leucine 134. Topologically, residues glycine 135–phenylalanine 378 are cytoplasmic. Residue lysine 150 forms a Glycyl lysine isopeptide (Lys-Gly) (interchain with G-Cter in ubiquitin) linkage. Positions phenylalanine 153–glutamate 339 are cyclic dinucleotide-binding domain (CBD). Positions 162 and 167 each coordinate 2',3'-cGAMP. 2 residues coordinate 3',3'-c-di-GMP: serine 162 and tyrosine 167. Tyrosine 167 is a 2',3'-cUAMP binding site. Lysine 236 is covalently cross-linked (Glycyl lysine isopeptide (Lys-Gly) (interchain with G-Cter in ubiquitin)). Arginine 238 and threonine 263 together coordinate 2',3'-cGAMP. Positions 238 and 263 each coordinate 2',3'-cUAMP. Residues arginine 238–threonine 241 and threonine 263 each bind 3',3'-c-di-GMP. The segment at glutamate 339 to phenylalanine 378 is C-terminal tail (CTT). Serine 354 is subject to Phosphoserine. Serine 357 and serine 365 each carry phosphoserine; by TBK1. A pLxIS motif motif is present at residues leucine 362–serine 365.

Belongs to the STING family. As to quaternary structure, homodimer; forms a homodimer in absence of cyclic nucleotide (c-di-GMP or cGAMP); 'Lys-63'-linked ubiquitination at Lys-150 is required for homodimerization. Homotetramer; in presence of cyclic nucleotide (c-di-GMP or cGAMP), forms tetramers and higher-order oligomers through side-by-side packing. Interacts (when phosphorylated) with IRF3; following activation and phosphorylation on the pLxIS motif by TBK1, recruits IRF3. Interacts with RIGI, MAVS and SSR2. Interacts with RNF5 and TRIM56. Interacts with TBK1; when homodimer, leading to subsequent production of IFN-beta. Interacts with IFIT1 and IFIT2. Interacts with TRIM29; this interaction induces STING1 ubiquitination and subsequent degradation. Associates with the MHC-II complex. Interacts with STEEP1; interaction takes place upon cGAMP-activation and STING1 phosphorylation by MAP3K7/TAK1 and promotes STING1 translocation to COPII vesicles. Interacts with SEC24A, SEC24B and SEC24C; promoting translocation to COPII vesicles. Interacts (when ubiquitinated) with SQSTM1; leading to relocalization to autophagosomes. Interacts with SURF4. Interacts with HNRNPA2B1. Interacts with ZDHHC1; ZDHHC1 constitutively interacts with STING1 and in presence of DNA viruses activates it by promoting its cGAMP-induced oligomerization and the recruitment of downstream signaling components. Interacts with ZDHHC11; in presence of DNA viruses promotes the recruitment of IRF3 to STING1. Interacts with TOMM70. Interacts with TAB1; promoting recruitment of TAB1 to the endoplasmic reticulum membrane and subsequent activation of MAP3K7/TAK1. Interacts (via transmembrane domain) with TMEM203. Interacts with DDX41. Post-translationally, phosphorylation by TBK1 leads to activation and production of IFN-beta. Following cyclic nucleotide (c-di-GMP or cGAMP)-binding, activation and translocation from the endoplasmic reticulum, STING1 is phosphorylated by TBK1 at Ser-365 in the pLxIS motif. The phosphorylated pLxIS motif constitutes an IRF3-binding motif, leading to recruitment of the transcription factor IRF3 to induce type-I interferons and other cytokines. Phosphorylated on tyrosine residues upon MHC-II aggregation. Dephosphorylation by PPP6C leads to inactivation and decreased production of IFN-beta. Phosphorylation at Ser-357 is also required to activate IRF3. Phosphorylation at Ser-354 by MAP3K7/TAK1 facilitates its interaction with STEEP1, promoting STING1 translocation to COPII vesicles. In terms of processing, ubiquitinated. Ubiquitinated via 'Lys-63'-linked ubiquitin chains in response to double-stranded DNA treatment, leading to relocalization to autophagosomes and subsequent degradation; this process is dependent on SQSTM1. 'Lys-63'-linked ubiquitination mediated by TRIM56 at Lys-150 promotes homodimerization and recruitment of the antiviral kinase TBK1 and subsequent production of IFN-beta. 'Lys-48'-linked polyubiquitination at Lys-150 occurring after viral infection is mediated by RNF5 and leads to proteasomal degradation. 'Lys-11'-linked polyubiquitination at Lys-150 by RNF26 leads to stabilize STING1: it protects STING1 from RNF5-mediated 'Lys-48'-linked polyubiquitination. 'Lys-33'-linked and 'Lys-48'-linked deubiquitinated by USP20; leading to its stabilization and promotion of innate antiviral response. 'Lys-48'-linked deubiquitinated by USP44; leading to its stabilization and promotion of innate antiviral response. 'Lys-63'-linked deubiquitinated by USP49; leading to inhibition of the subsequent recruitment of TBK1 to the signaling complex. 'Lys-63'-linked ubiquitination mediated by RNF39 promotes the activation of the cGAS-STING pathway. Palmitoylation takes place in the Golgi apparatus and creates a platform for the recruitment of TBK1.

It is found in the endoplasmic reticulum membrane. The protein localises to the cytoplasm. The protein resides in the perinuclear region. It localises to the endoplasmic reticulum-Golgi intermediate compartment membrane. Its subcellular location is the golgi apparatus membrane. It is found in the cytoplasmic vesicle. The protein localises to the autophagosome membrane. The protein resides in the mitochondrion outer membrane. It localises to the cell membrane. It catalyses the reaction H(+)(in) = H(+)(out). In terms of biological role, facilitator of innate immune signaling that acts as a sensor of cytosolic DNA from bacteria and viruses and promotes the production of type I interferon (IFN-alpha and IFN-beta). Innate immune response is triggered in response to non-CpG double-stranded DNA from viruses and bacteria delivered to the cytoplasm. Acts by binding cyclic dinucleotides: recognizes and binds cyclic di-GMP (c-di-GMP), a second messenger produced by bacteria, cyclic UMP-AMP (2',3'-cUAMP), and cyclic GMP-AMP (cGAMP), a messenger produced by CGAS in response to DNA virus in the cytosol. Upon binding to c-di-GMP or cGAMP, STING oligomerizes, translocates from the endoplasmic reticulum and is phosphorylated by TBK1 on the pLxIS motif, leading to recruitment and subsequent activation of the transcription factor IRF3 to induce expression of type I interferon and exert a potent anti-viral state. Exhibits 2',3' phosphodiester linkage-specific ligand recognition: can bind both 2'-3' linked cGAMP (2'-3'-cGAMP) and 3'-3' linked cGAMP but is preferentially activated by 2'-3' linked cGAMP. The preference for 2'-3'-cGAMP, compared to other linkage isomers is probably due to the ligand itself, whichs adopts an organized free-ligand conformation that resembles the STING1-bound conformation and pays low energy costs in changing into the active conformation. In addition to promote the production of type I interferons, plays a direct role in autophagy. Following cGAMP-binding, STING1 buds from the endoplasmic reticulum into COPII vesicles, which then form the endoplasmic reticulum-Golgi intermediate compartment (ERGIC). The ERGIC serves as the membrane source for WIPI2 recruitment and LC3 lipidation, leading to formation of autophagosomes that target cytosolic DNA or DNA viruses for degradation by the lysosome. Promotes autophagy by acting as a proton channel that directs proton efflux from the Golgi to facilitate MAP1LC3B/LC3B lipidation. The autophagy- and interferon-inducing activities can be uncoupled and autophagy induction is independent of TBK1 phosphorylation. Autophagy is also triggered upon infection by bacteria: following c-di-GMP-binding, which is produced by live Gram-positive bacteria, promotes reticulophagy. May be involved in translocon function, the translocon possibly being able to influence the induction of type I interferons. May be involved in transduction of apoptotic signals via its association with the major histocompatibility complex class II (MHC-II). This is Stimulator of interferon genes protein from Bos taurus (Bovine).